Here is a 149-residue protein sequence, read N- to C-terminus: Cyanate hydratase (149 aa).

Residues arginine 90, glutamate 93, and serine 116 contribute to the active site.

The protein belongs to the cyanase family.

It catalyses the reaction cyanate + hydrogencarbonate + 3 H(+) = NH4(+) + 2 CO2. Functionally, catalyzes the reaction of cyanate with bicarbonate to produce ammonia and carbon dioxide. This Aquifex aeolicus (strain VF5) protein is Cyanate hydratase.